The following is a 417-amino-acid chain: Glucose-1-phosphate adenylyltransferase (417 aa).

Residues Tyr98, Gly163, 178–179 (EK), and Ser197 contribute to the alpha-D-glucose 1-phosphate site.

Belongs to the bacterial/plant glucose-1-phosphate adenylyltransferase family. Homotetramer.

It carries out the reaction alpha-D-glucose 1-phosphate + ATP + H(+) = ADP-alpha-D-glucose + diphosphate. Its pathway is glycan biosynthesis; glycogen biosynthesis. Involved in the biosynthesis of ADP-glucose, a building block required for the elongation reactions to produce glycogen. Catalyzes the reaction between ATP and alpha-D-glucose 1-phosphate (G1P) to produce pyrophosphate and ADP-Glc. The chain is Glucose-1-phosphate adenylyltransferase from Koribacter versatilis (strain Ellin345).